A 467-amino-acid chain; its full sequence is Cysteine--tRNA ligase (467 aa).

Zn(2+) is bound at residue C27. A 'HIGH' region motif is present at residues 29-39; that stretch reads ATVQGLPHIGH. Positions 209, 234, and 238 each coordinate Zn(2+). The 'KMSKS' region signature appears at 265 to 269; sequence KMSKS. Residue K268 coordinates ATP.

The protein belongs to the class-I aminoacyl-tRNA synthetase family. In terms of assembly, monomer. The cofactor is Zn(2+).

Its subcellular location is the cytoplasm. It carries out the reaction tRNA(Cys) + L-cysteine + ATP = L-cysteinyl-tRNA(Cys) + AMP + diphosphate. This is Cysteine--tRNA ligase from Mycolicibacterium gilvum (strain PYR-GCK) (Mycobacterium gilvum (strain PYR-GCK)).